The primary structure comprises 492 residues: Adenylyltransferase and sulfurtransferase uba4 (492 aa).

ATP-binding positions include G99, D120, 127 to 131, K144, and 188 to 189; these read SNLHR and DN. 2 residues coordinate Zn(2+): C237 and C240. C254 acts as the Glycyl thioester intermediate; for adenylyltransferase activity in catalysis. Zn(2+) is bound by residues C317 and C320. One can recognise a Rhodanese domain in the interval 378-490; the sequence is GSKEPTIIDV…WREQIDPDWP (113 aa). The active-site Cysteine persulfide intermediate; for sulfurtransferase activity is C445.

The protein in the N-terminal section; belongs to the HesA/MoeB/ThiF family. UBA4 subfamily. Zn(2+) serves as cofactor.

The protein resides in the cytoplasm. It is found in the cytosol. The enzyme catalyses [molybdopterin-synthase sulfur-carrier protein]-C-terminal Gly-Gly + ATP + H(+) = [molybdopterin-synthase sulfur-carrier protein]-C-terminal Gly-Gly-AMP + diphosphate. It carries out the reaction [molybdopterin-synthase sulfur-carrier protein]-C-terminal Gly-Gly-AMP + S-sulfanyl-L-cysteinyl-[cysteine desulfurase] + AH2 = [molybdopterin-synthase sulfur-carrier protein]-C-terminal-Gly-aminoethanethioate + L-cysteinyl-[cysteine desulfurase] + A + AMP + 2 H(+). It participates in tRNA modification; 5-methoxycarbonylmethyl-2-thiouridine-tRNA biosynthesis. It functions in the pathway cofactor biosynthesis; molybdopterin biosynthesis. Its function is as follows. Plays a central role in 2-thiolation of mcm(5)S(2)U at tRNA wobble positions of cytosolic tRNA(Lys), tRNA(Glu) and tRNA(Gln). Also essential during biosynthesis of the molybdenum cofactor. Acts by mediating the C-terminal thiocarboxylation of sulfur carriers urm1 and mocs2a. Its N-terminus first activates urm1 and mocs2a as acyl-adenylates (-COAMP), then the persulfide sulfur on the catalytic cysteine is transferred to urm1 and mocs2a to form thiocarboxylation (-COSH) of their C-terminus. The reaction probably involves hydrogen sulfide that is generated from the persulfide intermediate and that acts as a nucleophile towards urm1 and mocs2a. Subsequently, a transient disulfide bond is formed. Does not use thiosulfate as sulfur donor; nfs1 probably acting as a sulfur donor for thiocarboxylation reactions. This Aspergillus clavatus (strain ATCC 1007 / CBS 513.65 / DSM 816 / NCTC 3887 / NRRL 1 / QM 1276 / 107) protein is Adenylyltransferase and sulfurtransferase uba4.